The primary structure comprises 197 residues: Pyridoxal 5'-phosphate synthase subunit PdxT (197 aa).

54–56 (GES) is a binding site for L-glutamine. The active-site Nucleophile is the Cys86. L-glutamine contacts are provided by residues Arg113 and 141-142 (IR). Catalysis depends on charge relay system residues His177 and Glu179.

The protein belongs to the glutaminase PdxT/SNO family. In the presence of PdxS, forms a dodecamer of heterodimers. Only shows activity in the heterodimer.

It catalyses the reaction aldehydo-D-ribose 5-phosphate + D-glyceraldehyde 3-phosphate + L-glutamine = pyridoxal 5'-phosphate + L-glutamate + phosphate + 3 H2O + H(+). The enzyme catalyses L-glutamine + H2O = L-glutamate + NH4(+). The protein operates within cofactor biosynthesis; pyridoxal 5'-phosphate biosynthesis. In terms of biological role, catalyzes the hydrolysis of glutamine to glutamate and ammonia as part of the biosynthesis of pyridoxal 5'-phosphate. The resulting ammonia molecule is channeled to the active site of PdxS. The protein is Pyridoxal 5'-phosphate synthase subunit PdxT of Haloarcula marismortui (strain ATCC 43049 / DSM 3752 / JCM 8966 / VKM B-1809) (Halobacterium marismortui).